Here is a 393-residue protein sequence, read N- to C-terminus: 5-amino-6-(D-ribitylamino)uracil--L-tyrosine 4-hydroxyphenyl transferase (393 aa).

Positions 67 to 322 (VTYVINRNIN…GQWIVNHQPS (256 aa)) constitute a Radical SAM core domain. Residues Cys81, Cys85, and Cys88 each coordinate [4Fe-4S] cluster.

Belongs to the radical SAM superfamily. CofH family. In terms of assembly, consists of two subunits, CofG and CofH. [4Fe-4S] cluster serves as cofactor.

It catalyses the reaction 5-amino-6-(D-ribitylamino)uracil + L-tyrosine + S-adenosyl-L-methionine = 5-amino-5-(4-hydroxybenzyl)-6-(D-ribitylimino)-5,6-dihydrouracil + 2-iminoacetate + 5'-deoxyadenosine + L-methionine + H(+). Its pathway is cofactor biosynthesis; coenzyme F0 biosynthesis. Its function is as follows. Catalyzes the radical-mediated synthesis of 5-amino-5-(4-hydroxybenzyl)-6-(D-ribitylimino)-5,6-dihydrouracil from 5-amino-6-(D-ribitylamino)uracil and L-tyrosine. This chain is 5-amino-6-(D-ribitylamino)uracil--L-tyrosine 4-hydroxyphenyl transferase, found in Thermosynechococcus vestitus (strain NIES-2133 / IAM M-273 / BP-1).